A 279-amino-acid chain; its full sequence is Acyl-[acyl-carrier-protein]--UDP-N-acetylglucosamine O-acyltransferase (279 aa).

Positions I256–S279 are disordered.

Belongs to the transferase hexapeptide repeat family. LpxA subfamily. In terms of assembly, homotrimer.

The protein localises to the cytoplasm. The enzyme catalyses a (3R)-hydroxyacyl-[ACP] + UDP-N-acetyl-alpha-D-glucosamine = a UDP-3-O-[(3R)-3-hydroxyacyl]-N-acetyl-alpha-D-glucosamine + holo-[ACP]. It functions in the pathway glycolipid biosynthesis; lipid IV(A) biosynthesis; lipid IV(A) from (3R)-3-hydroxytetradecanoyl-[acyl-carrier-protein] and UDP-N-acetyl-alpha-D-glucosamine: step 1/6. Its function is as follows. Involved in the biosynthesis of lipid A, a phosphorylated glycolipid that anchors the lipopolysaccharide to the outer membrane of the cell. The chain is Acyl-[acyl-carrier-protein]--UDP-N-acetylglucosamine O-acyltransferase from Chlamydia caviae (strain ATCC VR-813 / DSM 19441 / 03DC25 / GPIC) (Chlamydophila caviae).